The chain runs to 321 residues: MDEYRELISVLPLDTVEYAFAYGSGAIQQKDENKAEKMVDFVVVTKDAQEFHKANIAKNPQHYSLLRLLGPKMLEKIQCNFAARVYYNTHVNVGKRKIKYGIISYENVKQDLLDWRWIYISGRLHKPVLDVIKPKDDMCDLVTENRRSALHSALLLLPESFTLKQLFHQIVGLSYTGDFRMIVGEDKNKIMKIVEGNYEELMRVYEPLMNDDARLSVMSPAKVIQDGSTTAIYHRLNLLPSEVLNQIQKNMNKAQKRQRDAEEVIFSLAHRHDVAATVETAIGGIIRPISFSQTAKNAFSAGMTRSVIYSLAKMSKFLKSK.

The protein belongs to the TAM41 family. Requires Mg(2+) as cofactor. Co(2+) is required as a cofactor. The cofactor is Cu(2+).

Its subcellular location is the mitochondrion inner membrane. The enzyme catalyses a 1,2-diacyl-sn-glycero-3-phosphate + CTP + H(+) = a CDP-1,2-diacyl-sn-glycerol + diphosphate. It participates in phospholipid metabolism; CDP-diacylglycerol biosynthesis; CDP-diacylglycerol from sn-glycerol 3-phosphate: step 3/3. Functionally, catalyzes the formation of CDP-diacylglycerol (CDP-DAG) from phosphatidic acid (PA) in the mitochondrial inner membrane. Required for the biosynthesis of the dimeric phospholipid cardiolipin, which stabilizes supercomplexes of the mitochondrial respiratory chain in the mitochondrial inner membrane. This is Phosphatidate cytidylyltransferase, mitochondrial from Caenorhabditis briggsae.